The sequence spans 327 residues: Flotillin-like protein FloA (327 aa).

A helical membrane pass occupies residues 2-22 (IGLIIIVVIVLVALLLLFSFV). The segment at 305 to 327 (ADTGMRNSINQRTNQKDDESPDK) is disordered. The span at 318–327 (NQKDDESPDK) shows a compositional bias: basic and acidic residues.

The protein belongs to the flotillin-like FloA family. As to quaternary structure, homooligomerizes.

Its subcellular location is the cell membrane. It localises to the membrane raft. Its function is as follows. Found in functional membrane microdomains (FMM) that may be equivalent to eukaryotic membrane rafts. FMMs are highly dynamic and increase in number as cells age. Flotillins are thought to be important factors in membrane fluidity. This is Flotillin-like protein FloA from Staphylococcus saprophyticus subsp. saprophyticus (strain ATCC 15305 / DSM 20229 / NCIMB 8711 / NCTC 7292 / S-41).